The primary structure comprises 603 residues: UvrABC system protein C (603 aa).

The GIY-YIG domain maps to 15–92; sequence DQPGCYLMKD…IKKHDPRFNI (78 aa). A UVR domain is found at 197 to 232; that stretch reads KTVKNDLMKKMQEAAENMEFEKAGEFRDQINAIETT.

This sequence belongs to the UvrC family. In terms of assembly, interacts with UvrB in an incision complex.

The protein resides in the cytoplasm. Its function is as follows. The UvrABC repair system catalyzes the recognition and processing of DNA lesions. UvrC both incises the 5' and 3' sides of the lesion. The N-terminal half is responsible for the 3' incision and the C-terminal half is responsible for the 5' incision. The protein is UvrABC system protein C of Listeria monocytogenes serotype 4a (strain HCC23).